A 117-amino-acid chain; its full sequence is Immunoglobulin heavy variable 3-11 (117 aa).

An N-terminal signal peptide occupies residues Met1–Cys19. A Pyrrolidone carboxylic acid modification is found at Gln20. The framework-1 stretch occupies residues Gln20–Ser44. The Ig-like domain maps to Gln20–Arg117. An intrachain disulfide couples Cys41 to Cys115. Positions Gly45–Tyr52 are complementarity-determining-1. Positions Met53–Tyr69 are framework-2. The tract at residues Ile70 to Thr77 is complementarity-determining-2. A framework-3 region spans residues Asn78 to Cys115. A complementarity-determining-3 region spans residues Ala116–Arg117.

As to quaternary structure, immunoglobulins are composed of two identical heavy chains and two identical light chains; disulfide-linked.

It localises to the secreted. It is found in the cell membrane. Its function is as follows. V region of the variable domain of immunoglobulin heavy chains that participates in the antigen recognition. Immunoglobulins, also known as antibodies, are membrane-bound or secreted glycoproteins produced by B lymphocytes. In the recognition phase of humoral immunity, the membrane-bound immunoglobulins serve as receptors which, upon binding of a specific antigen, trigger the clonal expansion and differentiation of B lymphocytes into immunoglobulins-secreting plasma cells. Secreted immunoglobulins mediate the effector phase of humoral immunity, which results in the elimination of bound antigens. The antigen binding site is formed by the variable domain of one heavy chain, together with that of its associated light chain. Thus, each immunoglobulin has two antigen binding sites with remarkable affinity for a particular antigen. The variable domains are assembled by a process called V-(D)-J rearrangement and can then be subjected to somatic hypermutations which, after exposure to antigen and selection, allow affinity maturation for a particular antigen. This is Immunoglobulin heavy variable 3-11 from Homo sapiens (Human).